A 476-amino-acid polypeptide reads, in one-letter code: Serine--tRNA ligase (476 aa).

Residue 280–282 (TAE) participates in L-serine binding. 311-313 (RAE) is an ATP binding site. Glutamate 334 lines the L-serine pocket. An ATP-binding site is contributed by 401–404 (EISS). Serine 436 is a binding site for L-serine.

This sequence belongs to the class-II aminoacyl-tRNA synthetase family. Type-1 seryl-tRNA synthetase subfamily. As to quaternary structure, homodimer. The tRNA molecule binds across the dimer.

It localises to the cytoplasm. The enzyme catalyses tRNA(Ser) + L-serine + ATP = L-seryl-tRNA(Ser) + AMP + diphosphate + H(+). It carries out the reaction tRNA(Sec) + L-serine + ATP = L-seryl-tRNA(Sec) + AMP + diphosphate + H(+). Its pathway is aminoacyl-tRNA biosynthesis; selenocysteinyl-tRNA(Sec) biosynthesis; L-seryl-tRNA(Sec) from L-serine and tRNA(Sec): step 1/1. Its function is as follows. Catalyzes the attachment of serine to tRNA(Ser). Is also able to aminoacylate tRNA(Sec) with serine, to form the misacylated tRNA L-seryl-tRNA(Sec), which will be further converted into selenocysteinyl-tRNA(Sec). This is Serine--tRNA ligase from Rhodopseudomonas palustris (strain HaA2).